A 110-amino-acid polypeptide reads, in one-letter code: Cytochrome bo(3) ubiquinol oxidase subunit 4 (110 aa).

Topologically, residues 1–18 are cytoplasmic; sequence MANAHDTHHEGNHGSVKS. The chain crosses the membrane as a helical span at residues 19–39; sequence YMIGFILSIILTAIPFGLAMS. Residues 40–46 are Periplasmic-facing; sequence PSLPKNL. A helical transmembrane segment spans residues 47–67; the sequence is TVLIIVAMAVIQVVVHLVYFL. Topologically, residues 68–78 are cytoplasmic; that stretch reads HMDRSKEQRNN. The chain crosses the membrane as a helical span at residues 79–99; sequence VWTFLFTTLVIALLVGLSLWI. Residues 100–110 lie on the Periplasmic side of the membrane; it reads MFSIHFEMLAK.

The protein belongs to the cytochrome c oxidase bacterial subunit 4 family. As to quaternary structure, heterooctamer of two A chains, two B chains, two C chains and two D chains.

It localises to the cell inner membrane. Cytochrome bo(3) ubiquinol terminal oxidase is the component of the aerobic respiratory chain of E.coli that predominates when cells are grown at high aeration. Has proton pump activity across the membrane in addition to electron transfer, pumping 2 protons/electron. The polypeptide is Cytochrome bo(3) ubiquinol oxidase subunit 4 (cyoD) (Pseudomonas putida (Arthrobacter siderocapsulatus)).